Reading from the N-terminus, the 396-residue chain is MAETQVRNFNINFGPQHPAAHGVLRLVLELDGEVVERVDPHIGLLHRGTEKLMEAKTYLQAVPYLDRLDYVAPMNQEHAYALAVERLLDIEVPKRGQLIRVLYSEIGRILNHLLNVTTQAMDVGALTPPLWGFEEREKLMVFYERACGARMHAAYFRPGGVHQDLPDQLIEDIGKWIDPFFTTLKNLDDLITPNRIFKQRNVDIGVVKLEDAWAWGFSGVMVRGSGAAWDLRKSQPYECYSEMEFDIPVGKNGDCYDRYLIRMEEMRQSARIMRQCVDLLLGKERVGPVSNTDHKIVPPKRGEMKRSMEALIHHFKLYTEGYHVPAGEVYAAVEAPKGEFGVYLVSDGSNKPYRCKLRAPGFAHLQAMDFLCRGHMLADVSAILGSLDIVFGEVDR.

Belongs to the complex I 49 kDa subunit family. In terms of assembly, NDH-1 is composed of 14 different subunits. Subunits NuoB, C, D, E, F, and G constitute the peripheral sector of the complex.

The protein localises to the cell inner membrane. The catalysed reaction is a quinone + NADH + 5 H(+)(in) = a quinol + NAD(+) + 4 H(+)(out). Functionally, NDH-1 shuttles electrons from NADH, via FMN and iron-sulfur (Fe-S) centers, to quinones in the respiratory chain. The immediate electron acceptor for the enzyme in this species is believed to be ubiquinone. Couples the redox reaction to proton translocation (for every two electrons transferred, four hydrogen ions are translocated across the cytoplasmic membrane), and thus conserves the redox energy in a proton gradient. The sequence is that of NADH-quinone oxidoreductase subunit D from Brucella canis (strain ATCC 23365 / NCTC 10854 / RM-666).